Reading from the N-terminus, the 60-residue chain is Ferredoxin-1 (60 aa).

4Fe-4S ferredoxin-type domains follow at residues 2 to 27 (LYIT…SAGD) and 28 to 60 (DIYV…IVQG). 8 residues coordinate [4Fe-4S] cluster: cysteine 8, cysteine 11, cysteine 14, cysteine 18, cysteine 37, cysteine 40, cysteine 48, and cysteine 52.

Requires [4Fe-4S] cluster as cofactor.

Its function is as follows. Ferredoxins are iron-sulfur proteins that transfer electrons in a wide variety of metabolic reactions. This chain is Ferredoxin-1, found in Chlorobium limicola.